The chain runs to 334 residues: Nucleoid-associated protein YPN_2714 (334 aa).

Belongs to the YejK family.

Its subcellular location is the cytoplasm. It localises to the nucleoid. The protein is Nucleoid-associated protein YPN_2714 of Yersinia pestis bv. Antiqua (strain Nepal516).